We begin with the raw amino-acid sequence, 329 residues long: Putative dehydrogenase RB0419 (329 aa).

This sequence belongs to the ornithine cyclodeaminase/mu-crystallin family.

This chain is Putative dehydrogenase RB0419, found in Rhizobium meliloti (strain 1021) (Ensifer meliloti).